The primary structure comprises 20 residues: Thrombin-like enzyme okinaxobin-2 (20 aa).

Residues 1 to 20 (VVGGDECNINEHRFLVALYY) enclose the Peptidase S1 domain.

Belongs to the peptidase S1 family. Snake venom subfamily. Monomer. Post-translationally, glycosylated. As to expression, expressed by the venom gland.

Its subcellular location is the secreted. Strongly inactivated by diisopropylfluorophosphate (DFP) and to a lesser extent by tosyl-L-lysine chloromethyl ketone (TLCK). Its function is as follows. Thrombin-like snake venom serine protease. Releases both fibrinopeptides A and B from fibrinogen (FGA and FGB) to form fibrin clots. This is Thrombin-like enzyme okinaxobin-2 from Ovophis okinavensis (Ryukyu Island pit viper).